Consider the following 464-residue polypeptide: Asparagine--tRNA ligase (464 aa).

The protein belongs to the class-II aminoacyl-tRNA synthetase family. As to quaternary structure, homodimer.

The protein resides in the cytoplasm. It carries out the reaction tRNA(Asn) + L-asparagine + ATP = L-asparaginyl-tRNA(Asn) + AMP + diphosphate + H(+). The sequence is that of Asparagine--tRNA ligase from Clostridium botulinum (strain Eklund 17B / Type B).